Reading from the N-terminus, the 229-residue chain is UPF0758 protein MA_1979 (229 aa).

Positions 106 to 228 constitute an MPN domain; the sequence is KICSPKDVYA…YVSLKDEGFV (123 aa). Positions 177, 179, and 190 each coordinate Zn(2+). The JAMM motif motif lies at 177-190; the sequence is HNHPSGDPSPSRED.

This sequence belongs to the UPF0758 family.

This chain is UPF0758 protein MA_1979, found in Methanosarcina acetivorans (strain ATCC 35395 / DSM 2834 / JCM 12185 / C2A).